Here is a 130-residue protein sequence, read N- to C-terminus: Capsid protein (130 aa).

The viral RNA-binding stretch occupies residues 32 to 105; that stretch reads EWISSNSRSQ…FATNSDCELI (74 aa).

The protein belongs to the Leviviricetes capsid protein family. As to quaternary structure, homodimer. The capsid proteins form dimers that assemble by group of 5. Twelve such pentamers are linked together with free dimers. The homodimers binds to the viral RNA via an operator hairpin, but also to many other RNA sequences in the viral genome; this interaction probably shifts the virus from the replicative to the assembly phase and ensures specific encapsidation of the viral genome.

The protein localises to the virion. Functionally, capsid protein self-assembles to form an icosahedral capsid with a T=3 symmetry, about 26 nm in diameter, and consisting of 89 capsid proteins dimers (178 capsid proteins). Involved in viral genome encapsidation through the interaction between a capsid protein dimer and the multiple packaging signals present in the RNA genome. The capsid also contains 1 copy of the A2 maturation protein. Its function is as follows. Acts as a translational repressor of viral replicase synthesis late in infection. This latter function is the result of capsid protein interaction with an RNA hairpin which contains the replicase ribosome-binding site. This is Capsid protein from Enterobacteria phage ZR (Bacteriophage ZR).